Reading from the N-terminus, the 152-residue chain is Large ribosomal subunit protein uL15 (152 aa).

Residues Met1 to Gly66 form a disordered region. A compositionally biased stretch (gly residues) spans Glu24–Asn36.

This sequence belongs to the universal ribosomal protein uL15 family. As to quaternary structure, part of the 50S ribosomal subunit.

Functionally, binds to the 23S rRNA. The polypeptide is Large ribosomal subunit protein uL15 (Akkermansia muciniphila (strain ATCC BAA-835 / DSM 22959 / JCM 33894 / BCRC 81048 / CCUG 64013 / CIP 107961 / Muc)).